A 226-amino-acid chain; its full sequence is Orotate phosphoribosyltransferase (226 aa).

5-phospho-alpha-D-ribose 1-diphosphate is bound by residues arginine 107, lysine 108, lysine 111, and 133 to 141 (EDLTTDGGS). Threonine 137 is an orotate binding site.

This sequence belongs to the purine/pyrimidine phosphoribosyltransferase family. PyrE subfamily. Homodimer. The cofactor is Mg(2+).

It carries out the reaction orotidine 5'-phosphate + diphosphate = orotate + 5-phospho-alpha-D-ribose 1-diphosphate. Its pathway is pyrimidine metabolism; UMP biosynthesis via de novo pathway; UMP from orotate: step 1/2. Its function is as follows. Catalyzes the transfer of a ribosyl phosphate group from 5-phosphoribose 1-diphosphate to orotate, leading to the formation of orotidine monophosphate (OMP). This Dinoroseobacter shibae (strain DSM 16493 / NCIMB 14021 / DFL 12) protein is Orotate phosphoribosyltransferase.